Here is a 4299-residue protein sequence, read N- to C-terminus: DNA-dependent protein kinase catalytic subunit (4299 aa).

Residues 551-590 (KDLNSTIKKENNNNNNNKNKNNNNNQTLTKEEISKSIKKL) adopt a coiled-coil conformation. Disordered stretches follow at residues 557–577 (IKKENNNNNNNKNKNNNNNQT), 613–633 (DENDNNSNSNSNNNNNNDQDN), 878–917 (NSSDSTSGGDIDIDSGGSMGGGGVVPPPSSSSRHRKMKFK), and 1206–1230 (SSSKNNSNSNSNNNNNNNNNSEDGT). 4 stretches are compositionally biased toward low complexity: residues 562–575 (NNNNNNKNKNNNNN), 617–631 (NNSNSNSNNNNNNDQ), 878–893 (NSSDSTSGGDIDIDSG), and 1206–1226 (SSSKNNSNSNSNNNNNNNNNS). Ser-2789 bears the Phosphoserine; by autocatalysis mark. Phosphothreonine; by autocatalysis occurs at positions 2814 and 2822. Residues 2832–2867 (SSSQSYGGTNNNTGSSQLSSSSSSSGSQSSSQNNSS) show a composition bias toward low complexity. Disordered stretches follow at residues 2832-2881 (SSSQ…PKLI) and 3535-3559 (TTSSSPSLSISSSSSPYSSTSSSSQ). Positions 3031–3707 (KIKDISLNSN…YFPFKISSEQ (677 aa)) constitute an FAT domain. The PI3K/PI4K catalytic domain maps to 3887 to 4226 (FDTNVLVMGS…AKKKLELVNP (340 aa)). The segment at 3893–3899 (VMGSLRK) is G-loop. Residues 4092 to 4100 (GIGDRHLEN) are catalytic loop. The segment at 4112–4137 (GIDFGHAFGTATQFLPIPELMPFRLT) is activation loop. In terms of domain architecture, FATC spans 4267–4299 (VCSSVKEQIDCLIDQSTDPNILSRAWVGWNGAL).

It belongs to the PI3/PI4-kinase family. DNAPK subfamily. Post-translationally, may be phosphorylated upon DNA damage. Could be autophosphorylated. Autophosphorylation induces a conformational change that leads to remodeling of the DNA-PK complex, requisite for efficient end processing and DNA repair. Autophosphorylated on Ser-2789, Thr-2814 and Thr-2822. Ser-2789 is a DNA damage-inducible phosphorylation site (inducible with ionizing radiation, IR).

It localises to the nucleus. The protein resides in the nucleolus. It carries out the reaction L-seryl-[protein] + ATP = O-phospho-L-seryl-[protein] + ADP + H(+). It catalyses the reaction L-threonyl-[protein] + ATP = O-phospho-L-threonyl-[protein] + ADP + H(+). Inhibited by wortmannin. Activity of the enzyme seems to be attenuated by autophosphorylation. Serine/threonine-protein kinase that acts as a molecular sensor for DNA damage. Is recruited to DNA ends by the Ku70/Ku80 heterodimer and is involved in DNA non-homologous end joining (NHEJ) required for double-strand break (DSB) repair and V(D)J recombination. This activity is only apparent when DNA damage is administered in G1 phase of the cell cycle. Required for efficient signaling of DNA double-stranded breaks via phosphorylation of H2AX during G1. This Dictyostelium discoideum (Social amoeba) protein is DNA-dependent protein kinase catalytic subunit (dnapkcs).